Reading from the N-terminus, the 208-residue chain is FMN-dependent NADH:quinone oxidoreductase 1 (208 aa).

17-19 (SVS) contacts FMN.

This sequence belongs to the azoreductase type 1 family. Homodimer. It depends on FMN as a cofactor.

The enzyme catalyses 2 a quinone + NADH + H(+) = 2 a 1,4-benzosemiquinone + NAD(+). It catalyses the reaction N,N-dimethyl-1,4-phenylenediamine + anthranilate + 2 NAD(+) = 2-(4-dimethylaminophenyl)diazenylbenzoate + 2 NADH + 2 H(+). Quinone reductase that provides resistance to thiol-specific stress caused by electrophilic quinones. Functionally, also exhibits azoreductase activity. Catalyzes the reductive cleavage of the azo bond in aromatic azo compounds to the corresponding amines. The sequence is that of FMN-dependent NADH:quinone oxidoreductase 1 from Listeria monocytogenes serotype 4b (strain F2365).